The sequence spans 129 residues: ASNFTQFVLVNDGGTGNVTVAPSNFANGVAEWISSNSRSQAYKVTCSVRQSSAQNRKYTIKVEVPKVATQTVGGVELPVAAWRSYLNMELTIPIFATNSDCELIVKAMQGLLKDGNPIPSAIAANSGIY.

The tract at residues 31–104 (EWISSNSRSQ…FATNSDCELI (74 aa)) is viral RNA-binding.

This sequence belongs to the Leviviricetes capsid protein family. In terms of assembly, homodimer. The capsid proteins form dimers that assemble by group of 5. Twelve such pentamers are linked together with free dimers. The homodimers binds to the viral RNA via an operator hairpin, but also to many other RNA sequences in the viral genome; this interaction probably shifts the virus from the replicative to the assembly phase and ensures specific encapsidation of the viral genome.

It localises to the virion. Functionally, capsid protein self-assembles to form an icosahedral capsid with a T=3 symmetry, about 26 nm in diameter, and consisting of 89 capsid proteins dimers (178 capsid proteins). Involved in viral genome encapsidation through the interaction between a capsid protein dimer and the multiple packaging signals present in the RNA genome. The capsid also contains 1 copy of the A2 maturation protein. In terms of biological role, acts as a translational repressor of viral replicase synthesis late in infection. This latter function is the result of capsid protein interaction with an RNA hairpin which contains the replicase ribosome-binding site. The protein is Capsid protein of Escherichia coli (Bacteriophage R17).